Here is a 607-residue protein sequence, read N- to C-terminus: Matrix metalloproteinase-16 (607 aa).

The signal sequence occupies residues Met-1–Cys-31. Positions Ala-32–Arg-119 are excised as a propeptide. Residue Asn-83 is glycosylated (N-linked (GlcNAc...) asparagine). The short motif at Pro-99–Gln-106 is the Cysteine switch element. A Zn(2+)-binding site is contributed by Cys-101. Topologically, residues Tyr-120–Ala-564 are extracellular. Asp-183 contacts Ca(2+). His-193 and Asp-195 together coordinate Zn(2+). 4 residues coordinate Ca(2+): Asp-200, Gly-201, Gly-203, and Phe-205. Residue His-208 coordinates Zn(2+). Residues Gly-215, Gly-217, and Asp-219 each contribute to the Ca(2+) site. Residue His-221 coordinates Zn(2+). Residues Asp-223 and Glu-226 each contribute to the Ca(2+) site. His-246 contributes to the Zn(2+) binding site. Glu-247 is a catalytic residue. Residues His-250 and His-256 each contribute to the Zn(2+) site. The segment at Asp-281–Pro-340 is disordered. Residues Asp-294–Ala-315 show a composition bias toward pro residues. Hemopexin repeat units follow at residues Pro-340–Leu-388, Pro-389–Ile-434, Pro-436–Pro-484, and Glu-485–Cys-532. Cysteines 343 and 532 form a disulfide. A helical transmembrane segment spans residues Ile-565–Phe-585. At Gln-586 to Val-607 the chain is on the cytoplasmic side.

Belongs to the peptidase M10A family. Interacts with CSPG4 through CSPG4 chondroitin sulfate glycosaminoglycan. Zn(2+) serves as cofactor. It depends on Ca(2+) as a cofactor. The precursor is cleaved by a furin endopeptidase. Expressed in heart, brain, placenta, ovary and small intestine. Isoform Short is found in the ovary.

The protein localises to the cell membrane. Its subcellular location is the secreted. It localises to the extracellular space. The protein resides in the extracellular matrix. It is found in the cell surface. TIMP-2 shows little inhibitory activity compared to TIMP-1. TIMP-1 seems to have less binding affinity than TIMP-2 for the short isoform. In terms of biological role, endopeptidase that degrades various components of the extracellular matrix, such as collagen type III and fibronectin. Activates progelatinase A. Involved in the matrix remodeling of blood vessels. Isoform short cleaves fibronectin and also collagen type III, but at lower rate. It has no effect on type I, II, IV and V collagen. However, upon interaction with CSPG4, it may be involved in degradation and invasion of type I collagen by melanoma cells. This Homo sapiens (Human) protein is Matrix metalloproteinase-16.